The chain runs to 356 residues: Molybdenum import ATP-binding protein ModC (356 aa).

Residues 1 to 232 form the ABC transporter domain; it reads MEDIHARFHI…LDLPIRLGED (232 aa). 33–40 provides a ligand contact to ATP; it reads GHSGSGKT. Residues 291–356 enclose the Mop domain; the sequence is ETSVLNLLRG…VQVKSVALME (66 aa).

The protein belongs to the ABC transporter superfamily. Molybdate importer (TC 3.A.1.8) family. The complex is composed of two ATP-binding proteins (ModC), two transmembrane proteins (ModB) and a solute-binding protein (ModA).

Its subcellular location is the cell inner membrane. It catalyses the reaction molybdate(out) + ATP + H2O = molybdate(in) + ADP + phosphate + H(+). Part of the ABC transporter complex ModABC involved in molybdenum import. Responsible for energy coupling to the transport system. The polypeptide is Molybdenum import ATP-binding protein ModC (Methylococcus capsulatus (strain ATCC 33009 / NCIMB 11132 / Bath)).